Consider the following 342-residue polypeptide: Holliday junction branch migration complex subunit RuvB (342 aa).

Residues 1–185 (MRKDYLNSNK…FGINTRLAYY (185 aa)) form a large ATPase domain (RuvB-L) region. Residues L24, R25, G66, K69, T70, T71, 132-134 (EDF), R175, Y185, and R222 each bind ATP. T70 is a Mg(2+) binding site. The segment at 186–256 (DVTLLTQIVK…IAQMALKALD (71 aa)) is small ATPAse domain (RuvB-S). Positions 259-342 (EDGLDEMDNR…PPQRAGTLFE (84 aa)) are head domain (RuvB-H). Residues R314 and R319 each coordinate DNA.

It belongs to the RuvB family. Homohexamer. Forms an RuvA(8)-RuvB(12)-Holliday junction (HJ) complex. HJ DNA is sandwiched between 2 RuvA tetramers; dsDNA enters through RuvA and exits via RuvB. An RuvB hexamer assembles on each DNA strand where it exits the tetramer. Each RuvB hexamer is contacted by two RuvA subunits (via domain III) on 2 adjacent RuvB subunits; this complex drives branch migration. In the full resolvosome a probable DNA-RuvA(4)-RuvB(12)-RuvC(2) complex forms which resolves the HJ.

It localises to the cytoplasm. The catalysed reaction is ATP + H2O = ADP + phosphate + H(+). Its function is as follows. The RuvA-RuvB-RuvC complex processes Holliday junction (HJ) DNA during genetic recombination and DNA repair, while the RuvA-RuvB complex plays an important role in the rescue of blocked DNA replication forks via replication fork reversal (RFR). RuvA specifically binds to HJ cruciform DNA, conferring on it an open structure. The RuvB hexamer acts as an ATP-dependent pump, pulling dsDNA into and through the RuvAB complex. RuvB forms 2 homohexamers on either side of HJ DNA bound by 1 or 2 RuvA tetramers; 4 subunits per hexamer contact DNA at a time. Coordinated motions by a converter formed by DNA-disengaged RuvB subunits stimulates ATP hydrolysis and nucleotide exchange. Immobilization of the converter enables RuvB to convert the ATP-contained energy into a lever motion, pulling 2 nucleotides of DNA out of the RuvA tetramer per ATP hydrolyzed, thus driving DNA branch migration. The RuvB motors rotate together with the DNA substrate, which together with the progressing nucleotide cycle form the mechanistic basis for DNA recombination by continuous HJ branch migration. Branch migration allows RuvC to scan DNA until it finds its consensus sequence, where it cleaves and resolves cruciform DNA. The polypeptide is Holliday junction branch migration complex subunit RuvB (Amoebophilus asiaticus (strain 5a2)).